Reading from the N-terminus, the 364-residue chain is Cobalt-precorrin-5B C(1)-methyltransferase (364 aa).

The protein belongs to the CbiD family.

The enzyme catalyses Co-precorrin-5B + S-adenosyl-L-methionine = Co-precorrin-6A + S-adenosyl-L-homocysteine. It functions in the pathway cofactor biosynthesis; adenosylcobalamin biosynthesis; cob(II)yrinate a,c-diamide from sirohydrochlorin (anaerobic route): step 6/10. Its function is as follows. Catalyzes the methylation of C-1 in cobalt-precorrin-5B to form cobalt-precorrin-6A. The chain is Cobalt-precorrin-5B C(1)-methyltransferase from Pseudomonas entomophila (strain L48).